The primary structure comprises 359 residues: Patr class I histocompatibility antigen, B-1 alpha chain (359 aa).

Positions 1-20 are cleaved as a signal peptide; sequence APRTVLLLLSAALALTETWA. The interval 21 to 110 is alpha-1; that stretch reads GSHSMRYFYT…ALRYYNQSEA (90 aa). Residues 21–305 lie on the Extracellular side of the membrane; the sequence is GSHSMRYFYT…PSSQSTIPIV (285 aa). Asparagine 106 carries N-linked (GlcNAc...) asparagine glycosylation. The tract at residues 111–202 is alpha-2; it reads GSHTWQTMYG…ENGKETLQRA (92 aa). Cystine bridges form between cysteine 121–cysteine 184 and cysteine 223–cysteine 279. Residues 203 to 294 form an alpha-3 region; it reads DPPKTHVTHH…GLPKPLTLRW (92 aa). An Ig-like C1-type domain is found at 205–291; it reads PKTHVTHHPI…QHEGLPKPLT (87 aa). The tract at residues 295–305 is connecting peptide; sequence EPSSQSTIPIV. The helical transmembrane segment at 306 to 329 threads the bilayer; that stretch reads GIVAGLAVLVVTVAVVAVVAAVMC. Over 330 to 359 the chain is Cytoplasmic; it reads RRKSSGGKGGSYSQAASSDSAQGSDVSLTA. Positions 332–359 are disordered; the sequence is KSSGGKGGSYSQAASSDSAQGSDVSLTA. Over residues 340 to 359 the composition is skewed to low complexity; sequence SYSQAASSDSAQGSDVSLTA. Serine 353 and serine 356 each carry phosphoserine.

The protein belongs to the MHC class I family. In terms of assembly, heterodimer of an alpha chain and a beta chain (beta-2-microglobulin).

Its subcellular location is the membrane. Involved in the presentation of foreign antigens to the immune system. The protein is Patr class I histocompatibility antigen, B-1 alpha chain of Pan troglodytes (Chimpanzee).